A 127-amino-acid chain; its full sequence is Large ribosomal subunit protein bL19 (127 aa).

The protein belongs to the bacterial ribosomal protein bL19 family.

Functionally, this protein is located at the 30S-50S ribosomal subunit interface and may play a role in the structure and function of the aminoacyl-tRNA binding site. The chain is Large ribosomal subunit protein bL19 from Bradyrhizobium sp. (strain BTAi1 / ATCC BAA-1182).